The chain runs to 136 residues: Probable 5-hydroxyisourate hydrolase ZK697.8 (136 aa).

Positions 1 to 19 (MIKFLLFLAIAAATVISNA) are cleaved as a signal peptide. Substrate contacts are provided by His-31, Arg-69, and Tyr-133.

It belongs to the transthyretin family. 5-hydroxyisourate hydrolase subfamily. As to quaternary structure, homotetramer.

It catalyses the reaction 5-hydroxyisourate + H2O = 5-hydroxy-2-oxo-4-ureido-2,5-dihydro-1H-imidazole-5-carboxylate + H(+). Functionally, catalyzes the hydrolysis of 5-hydroxyisourate (HIU) to 2-oxo-4-hydroxy-4-carboxy-5-ureidoimidazoline (OHCU). In Caenorhabditis elegans, this protein is Probable 5-hydroxyisourate hydrolase ZK697.8.